We begin with the raw amino-acid sequence, 309 residues long: Caspase-7 (309 aa).

Residues 1–24 constitute a propeptide, N-terminally processed; sequence MSGDQHADRSSGEKSNGDQDDTVD. The span at 1 to 31 shows a compositional bias: basic and acidic residues; that stretch reads MSGDQHADRSSGEKSNGDQDDTVDAKPDRSS. Residues 1–53 form a disordered region; it reads MSGDQHADRSSGEKSNGDQDDTVDAKPDRSSRLSLFAKKKKNGEEEQPKSSLS. The exosite stretch occupies residues 39–42; the sequence is KKKN. The interval 81-92 is loop L1; it reads KNFEDKTGMGTR. Active-site residues include His-149 and Cys-191. The loop L2 stretch occupies residues 192-201; that stretch reads RGSEFDEGIQ. Positions 204–214 are excised as a propeptide; sequence SGPANDTLETD. The tract at residues 234 to 246 is loop L3; the sequence is VPGYYSWRNPGRG. Residues 282–296 are loop L4; that stretch reads ESQSDDPRFSEKKQI.

It belongs to the peptidase C14A family. As to quaternary structure, heterotetramer that consists of two anti-parallel arranged heterodimers, each one formed by a 20 kDa (p20) and a 11 kDa (p11) subunit. Cleavage by different proteases, such as granzyme B (GZMB), caspase-1 (CASP1), caspase-8 (CASP8) or caspase-9 (CASP9) generate the two active subunits. Its involvement in different programmed cell death processes is probably specified by the protease that activates CASP7. Cleaved and activated by initiator caspases (CASP8 and/or CASP9), leading to execution phase of apoptosis. Cleavage and maturation by GZMB regulates granzyme-mediated programmed cell death. Cleaved and activated by CASP1 in response to bacterial infection.

Its subcellular location is the cytoplasm. It is found in the cytosol. The protein localises to the nucleus. The protein resides in the secreted. It localises to the extracellular space. It carries out the reaction Strict requirement for an Asp residue at position P1 and has a preferred cleavage sequence of Asp-Glu-Val-Asp-|-.. With respect to regulation, during activation, the N-terminal disordered prodomain is removed by cleavage. Concomitantly, double cleavage gives rise to a large Caspase-7 subunit p20 and a small Caspase-7 subunit p11. The two large and two small subunits then assemble to form the active CASP7 complex. Can be cleaved and activated by different caspases, depending on the context. Cleaved and activated by initiator caspases (CASP8 and/or CASP9), leading to execution phase of apoptosis. Cleavage and maturation by GZMB regulates granzyme-mediated programmed cell death. Cleavage and maturation by CASP1 regulates pyroptosis. Inhibited by BIRC6; following inhibition of BIRC6-caspase binding by DIABLO/SMAC, BIRC6 is subjected to caspase cleavage, leading to an increase in active caspases. Thiol protease involved in different programmed cell death processes, such as apoptosis, pyroptosis or granzyme-mediated programmed cell death, by proteolytically cleaving target proteins. Has a marked preference for Asp-Glu-Val-Asp (DEVD) consensus sequences, with some plasticity for alternate non-canonical sequences. Its involvement in the different programmed cell death processes is probably determined by upstream proteases that activate CASP7. Acts as an effector caspase involved in the execution phase of apoptosis: following cleavage and activation by initiator caspases (CASP8 and/or CASP9), mediates execution of apoptosis by catalyzing cleavage of proteins. Compared to CASP3, acts as a minor executioner caspase and cleaves a limited set of target proteins. Acts as a key regulator of the inflammatory response in response to bacterial infection by catalyzing cleavage and activation of the sphingomyelin phosphodiesterase SMPD1 in the extracellular milieu, thereby promoting membrane repair. Cleaves BIRC6 following inhibition of BIRC6-caspase binding by DIABLO/SMAC. In Gallus gallus (Chicken), this protein is Caspase-7.